The primary structure comprises 433 residues: Cell adhesion molecule 2 (433 aa).

An N-terminal signal peptide occupies residues 1 to 24 (MILQPSALLCLSSLWGVIVQASQG). Residues 25–365 (QFPVTQNVTV…ALPGPVATDH (341 aa)) lie on the Extracellular side of the membrane. The region spanning 27–114 (PVTQNVTVVE…SLFTMPVKTS (88 aa)) is the Ig-like V-type domain. 3 N-linked (GlcNAc...) asparagine glycosylation sites follow: asparagine 31, asparagine 41, and asparagine 51. Disulfide bonds link cysteine 44–cysteine 104, cysteine 146–cysteine 203, and cysteine 248–cysteine 296. 2 consecutive Ig-like C2-type domains span residues 127-217 (PHIS…PQIA) and 227-312 (PTVR…YVLI). 2 N-linked (GlcNAc...) asparagine glycosylation sites follow: asparagine 287 and asparagine 291. The helical transmembrane segment at 366 to 386 (ALIGGVVAVVVFVTLCSIILI) threads the bilayer. Over 387-433 (GRYLARHKGTYLTNEAKGAEDAPDADTAIINAEGSQVNAEEKKEYFI) the chain is Cytoplasmic.

This sequence belongs to the nectin family.

It is found in the membrane. In Xenopus tropicalis (Western clawed frog), this protein is Cell adhesion molecule 2 (cadm2).